Reading from the N-terminus, the 299-residue chain is Pyridoxal 5'-phosphate synthase subunit PdxS (299 aa).

Residue Asp29 participates in D-ribose 5-phosphate binding. Lys86 serves as the catalytic Schiff-base intermediate with D-ribose 5-phosphate. A D-ribose 5-phosphate-binding site is contributed by Gly158. Arg170 is a binding site for D-glyceraldehyde 3-phosphate. Residues Gly219 and 240–241 (GS) each bind D-ribose 5-phosphate.

It belongs to the PdxS/SNZ family. In terms of assembly, in the presence of PdxT, forms a dodecamer of heterodimers.

The catalysed reaction is aldehydo-D-ribose 5-phosphate + D-glyceraldehyde 3-phosphate + L-glutamine = pyridoxal 5'-phosphate + L-glutamate + phosphate + 3 H2O + H(+). Its pathway is cofactor biosynthesis; pyridoxal 5'-phosphate biosynthesis. In terms of biological role, catalyzes the formation of pyridoxal 5'-phosphate from ribose 5-phosphate (RBP), glyceraldehyde 3-phosphate (G3P) and ammonia. The ammonia is provided by the PdxT subunit. Can also use ribulose 5-phosphate and dihydroxyacetone phosphate as substrates, resulting from enzyme-catalyzed isomerization of RBP and G3P, respectively. The polypeptide is Pyridoxal 5'-phosphate synthase subunit PdxS (Mycobacterium bovis (strain ATCC BAA-935 / AF2122/97)).